The chain runs to 424 residues: 3-ketoacyl-CoA thiolase, peroxisomal (424 aa).

A peroxisome-targeting transit peptide spans 1–26 (MQRLQVVLGHLRGPADSGWMPQAAPC). A PTS2-type peroxisomal targeting signal region spans residues 1 to 26 (MQRLQVVLGHLRGPADSGWMPQAAPC). A phosphothreonine mark is found at Thr59 and Thr60. Cys123 serves as the catalytic Acyl-thioester intermediate. Catalysis depends on proton acceptor residues His377 and Cys408.

The protein belongs to the thiolase-like superfamily. Thiolase family. In terms of assembly, homodimer. Interacts (via PTS2-type peroxisomal targeting signal region) with PEX7; leading to its translocation into peroxisomes.

It is found in the peroxisome. It carries out the reaction an acyl-CoA + acetyl-CoA = a 3-oxoacyl-CoA + CoA. The catalysed reaction is 2 acetyl-CoA = acetoacetyl-CoA + CoA. It catalyses the reaction tetradecanoyl-CoA + acetyl-CoA = 3-oxohexadecanoyl-CoA + CoA. The enzyme catalyses hexanoyl-CoA + acetyl-CoA = 3-oxooctanoyl-CoA + CoA. It carries out the reaction 3-oxohexadecanedioyl-CoA + CoA = tetradecanedioyl-CoA + acetyl-CoA. The catalysed reaction is 3-oxo-(6Z,9Z,12Z,15Z,18Z,21Z)-tetracosahexaenoyl-CoA + CoA = (4Z,7Z,10Z,13Z,16Z,19Z)-docosahexaenoyl-CoA + acetyl-CoA. Its pathway is lipid metabolism; peroxisomal fatty acid beta-oxidation. In terms of biological role, responsible for the thiolytic cleavage of straight chain 3-keto fatty acyl-CoAs (3-oxoacyl-CoAs). Plays an important role in fatty acid peroxisomal beta-oxidation. Catalyzes the cleavage of short, medium, long, and very long straight chain 3-oxoacyl-CoAs. The chain is 3-ketoacyl-CoA thiolase, peroxisomal from Homo sapiens (Human).